Consider the following 729-residue polypeptide: MAKLSTPLYLICLAFIFTRDVSANDYRQASSVYIVYMGTLPEIKYSPPSHHLSILQKLVGTIAASHLLVRSYKRSFNGFAANLSQAESQKLQNMKEVVSVFPSKSHELTTTRSWDFVGFGEKARRESVKESDVIVGVIDSGIWPESESFDDEGFGPPPKKWKGSCKGGLKFACNNKLIGARFYNKFADSARDEEGHGTHTASTAAGNAVQAASFYGLAQGTARGGVPSARIAAYKVCFNRCNDVDILAAFDDAIADGVDVISISISADYVSNLLNASVAIGSFHAMMRGIITAGSAGNNGPDQGSVANVSPWMITVAASGTDRQFIDRVVLGNGKALTGISVNTFNLNGTKFPIVYGQNVSRNCSQAQAGYCSSGCVDSELVKGKIVLCDDFLGYREAYLAGAIGVIVQNTLLPDSAFVVPFPASSLGFEDYKSIKSYIESAEPPQAEILRTEEIVDREAPYVPSFSSRGPSFVIQNLLKPDVSAPGLEILAAFSPVASPSSFLNPEDKRSVRYSVMSGTSMACPHVAGVAAYVKSFHPDWSPSAIKSAIMTTATPMNLKKNPEQEFAYGSGQINPTKASDPGLVYEVETEDYLKMLCAEGFDSTTLTTTSGQNVTCSERTEVKDLNYPTMTTFVSSLDPFNVTFKRTVTNVGFPNSTYKASVVPLQPELQISIEPEILRFGFLEEKKSFVVTISGKELKDGSFVSSSVVWSDGSHSVRSPIVAYSIQP.

The N-terminal stretch at 1–23 (MAKLSTPLYLICLAFIFTRDVSA) is a signal peptide. Positions 24 to 109 (NDYRQASSVY…VFPSKSHELT (86 aa)) are cleaved as a propeptide — activation peptide. The 77-residue stretch at 32 to 108 (VYIVYMGTLP…SVFPSKSHEL (77 aa)) folds into the Inhibitor I9 domain. A glycan (N-linked (GlcNAc...) asparagine) is linked at Asn82. The Peptidase S8 domain maps to 113–580 (SWDFVGFGEK…SGQINPTKAS (468 aa)). Residues Asp139 and His196 each act as charge relay system in the active site. Residues Asn275, Asn348, Asn359, and Asn363 are each glycosylated (N-linked (GlcNAc...) asparagine). The PA domain occupies 350 to 436 (TKFPIVYGQN…LGFEDYKSIK (87 aa)). Ser521 (charge relay system) is an active-site residue. N-linked (GlcNAc...) asparagine glycosylation is found at Asn614, Asn642, and Asn656.

This sequence belongs to the peptidase S8 family. In terms of processing, the C-terminal propeptide is autocleaved.

The protein localises to the secreted. This Arabidopsis thaliana (Mouse-ear cress) protein is Subtilisin-like protease SBT4.3.